The sequence spans 458 residues: DNA repair protein RadA (458 aa).

A C4-type zinc finger spans residues 10–27; sequence CQSCGYESPKWMGKCPGC. An ATP-binding site is contributed by 98 to 105; sequence GDPGIGKS. A RadA KNRFG motif motif is present at residues 255-259; that stretch reads KNRFG. Residues 354–458 form a lon-protease-like region; sequence DAYLKVAGGV…AEALRTSLGG (105 aa).

It belongs to the RecA family. RadA subfamily. In terms of assembly, interacts with DisA.

DNA-dependent ATPase involved in processing of recombination intermediates, plays a role in repairing DNA breaks. Stimulates the branch migration of RecA-mediated strand transfer reactions, allowing the 3' invading strand to extend heteroduplex DNA faster. Binds ssDNA in the presence of ADP but not other nucleotides, has ATPase activity that is stimulated by ssDNA and various branched DNA structures, but inhibited by SSB. Does not have RecA's homology-searching function. In terms of biological role, plays a role in DNA repair. Might stabilize or process Holliday junction intermediates. May work with DisA following methyl methanesulfonate (MMS) but not H(2)O(2) damage; DisA is a DNA integrity scanning protein with c-di-AMP synthase activity. This is DNA repair protein RadA from Bacillus subtilis (strain 168).